A 552-amino-acid polypeptide reads, in one-letter code: Lysine--tRNA ligase (552 aa).

The 'HIGH' region signature appears at 72–80 (PSGLPHLGT). Positions 320–324 (KISKS) match the 'KMSKS' region motif. Residue Lys323 participates in ATP binding.

Belongs to the class-I aminoacyl-tRNA synthetase family.

Its subcellular location is the cytoplasm. It catalyses the reaction tRNA(Lys) + L-lysine + ATP = L-lysyl-tRNA(Lys) + AMP + diphosphate. This is Lysine--tRNA ligase from Caulobacter vibrioides (strain ATCC 19089 / CIP 103742 / CB 15) (Caulobacter crescentus).